The chain runs to 221 residues: Adenylate kinase (221 aa).

10-15 (GAGKGT) serves as a coordination point for ATP. Residues 30–59 (STGDMLRAAVKAGTPLGVEAKKVMDAGGLV) form an NMP region. Residues threonine 31, arginine 36, 57–59 (GLV), 85–88 (GFPR), and glutamine 92 each bind AMP. The segment at 122-159 (GRRVHVASGRTYHLKYNPPKTEGVDDETGEPLIQRDDD) is LID. ATP-binding positions include arginine 123 and 132 to 133 (TY). The disordered stretch occupies residues 138–159 (NPPKTEGVDDETGEPLIQRDDD). Arginine 156 and arginine 167 together coordinate AMP. Glycine 207 is an ATP binding site.

Belongs to the adenylate kinase family. Monomer.

The protein localises to the cytoplasm. It catalyses the reaction AMP + ATP = 2 ADP. It participates in purine metabolism; AMP biosynthesis via salvage pathway; AMP from ADP: step 1/1. In terms of biological role, catalyzes the reversible transfer of the terminal phosphate group between ATP and AMP. Plays an important role in cellular energy homeostasis and in adenine nucleotide metabolism. In Cupriavidus taiwanensis (strain DSM 17343 / BCRC 17206 / CCUG 44338 / CIP 107171 / LMG 19424 / R1) (Ralstonia taiwanensis (strain LMG 19424)), this protein is Adenylate kinase.